We begin with the raw amino-acid sequence, 350 residues long: GTPase Obg (350 aa).

An Obg domain is found at 1 to 159; the sequence is MKLVDEAEIL…RLLKLELKLL (159 aa). Residues 160–337 form the OBG-type G domain; that stretch reads ADVGLLGFPN…IMKDVMAFFD (178 aa). Residues 166 to 173, 191 to 195, 213 to 216, 287 to 290, and 318 to 320 each bind GTP; these read GFPNAGKS, FTTLY, DVPG, NKAD, and SAL. Residues serine 173 and threonine 193 each coordinate Mg(2+).

It belongs to the TRAFAC class OBG-HflX-like GTPase superfamily. OBG GTPase family. As to quaternary structure, monomer. Mg(2+) serves as cofactor.

It is found in the cytoplasm. Its function is as follows. An essential GTPase which binds GTP, GDP and possibly (p)ppGpp with moderate affinity, with high nucleotide exchange rates and a fairly low GTP hydrolysis rate. Plays a role in control of the cell cycle, stress response, ribosome biogenesis and in those bacteria that undergo differentiation, in morphogenesis control. The protein is GTPase Obg of Xanthomonas campestris pv. campestris (strain 8004).